The following is a 185-amino-acid chain: Large ribosomal subunit protein uL5m (185 aa).

The protein belongs to the universal ribosomal protein uL5 family.

It localises to the mitochondrion. This chain is Large ribosomal subunit protein uL5m (RPL5), found in Brassica napus (Rape).